The sequence spans 535 residues: Sodium channel protein Nach (535 aa).

Residues 1 to 49 lie on the Cytoplasmic side of the membrane; that stretch reads MGHQEELKPEQVDLKVTPFVGYLRRTWSDFCATSSIHGLKYTRDEDTNK. The chain crosses the membrane as a helical span at residues 50–70; the sequence is IVHLVWLLISVVMFICAVVMA. Over 71-471 the chain is Extracellular; sequence RTFYMDYRSS…LVSNLGSAFS (401 aa). N-linked (GlcNAc...) asparagine glycosylation is found at asparagine 165, asparagine 239, and asparagine 367. Residues 472–492 traverse the membrane as a helical segment; that stretch reads LFVGMSMLSVVEIIYYFSVIL. Topologically, residues 493 to 535 are cytoplasmic; it reads RKNYKLECETRSQMLHKKPKFAWPKANDTHSKEQKSVFIIHKS.

This sequence belongs to the amiloride-sensitive sodium channel (TC 1.A.6) family. In terms of tissue distribution, embryonic and larval tracheal system; dorsal trunk (but not at fusion with transverse connective), several branches and terminal cells. Also expressed in adult tracheal system; dorsal trunk, but not at the spiracles.

It is found in the membrane. Part of a complex that plays a role in tracheal liquid clearance. Probable role in sodium transport. In Drosophila melanogaster (Fruit fly), this protein is Sodium channel protein Nach (Nach).